The following is a 327-amino-acid chain: Phenylalanine--tRNA ligase alpha subunit (327 aa).

E252 is a Mg(2+) binding site.

Belongs to the class-II aminoacyl-tRNA synthetase family. Phe-tRNA synthetase alpha subunit type 1 subfamily. As to quaternary structure, tetramer of two alpha and two beta subunits. It depends on Mg(2+) as a cofactor.

It localises to the cytoplasm. The enzyme catalyses tRNA(Phe) + L-phenylalanine + ATP = L-phenylalanyl-tRNA(Phe) + AMP + diphosphate + H(+). The protein is Phenylalanine--tRNA ligase alpha subunit of Shewanella woodyi (strain ATCC 51908 / MS32).